The chain runs to 227 residues: Cytochrome c oxidase subunit 2 (227 aa).

Residues 1–14 (MAYPLQLGFQDATS) are Mitochondrial intermembrane-facing. A helical transmembrane segment spans residues 15 to 45 (PVMEELLHFHDHTLMIIFLISSLVLYIIMLM). The Mitochondrial matrix portion of the chain corresponds to 46–59 (LTTKLVHTNMMNVQ). A helical transmembrane segment spans residues 60–87 (EMEMIWTILPAIILILIALPSLHTLYMM). Residues 88–227 (DEINNPLLTI…YFESWSASLA (140 aa)) are Mitochondrial intermembrane-facing. H161, C196, E198, C200, H204, and M207 together coordinate Cu cation. E198 is a binding site for Mg(2+). Phosphotyrosine is present on Y218.

The protein belongs to the cytochrome c oxidase subunit 2 family. As to quaternary structure, component of the cytochrome c oxidase (complex IV, CIV), a multisubunit enzyme composed of 14 subunits. The complex is composed of a catalytic core of 3 subunits MT-CO1, MT-CO2 and MT-CO3, encoded in the mitochondrial DNA, and 11 supernumerary subunits COX4I, COX5A, COX5B, COX6A, COX6B, COX6C, COX7A, COX7B, COX7C, COX8 and NDUFA4, which are encoded in the nuclear genome. The complex exists as a monomer or a dimer and forms supercomplexes (SCs) in the inner mitochondrial membrane with NADH-ubiquinone oxidoreductase (complex I, CI) and ubiquinol-cytochrome c oxidoreductase (cytochrome b-c1 complex, complex III, CIII), resulting in different assemblies (supercomplex SCI(1)III(2)IV(1) and megacomplex MCI(2)III(2)IV(2)). Found in a complex with TMEM177, COA6, COX18, COX20, SCO1 and SCO2. Interacts with TMEM177 in a COX20-dependent manner. Interacts with COX20. Interacts with COX16. It depends on Cu cation as a cofactor.

It is found in the mitochondrion inner membrane. It catalyses the reaction 4 Fe(II)-[cytochrome c] + O2 + 8 H(+)(in) = 4 Fe(III)-[cytochrome c] + 2 H2O + 4 H(+)(out). Component of the cytochrome c oxidase, the last enzyme in the mitochondrial electron transport chain which drives oxidative phosphorylation. The respiratory chain contains 3 multisubunit complexes succinate dehydrogenase (complex II, CII), ubiquinol-cytochrome c oxidoreductase (cytochrome b-c1 complex, complex III, CIII) and cytochrome c oxidase (complex IV, CIV), that cooperate to transfer electrons derived from NADH and succinate to molecular oxygen, creating an electrochemical gradient over the inner membrane that drives transmembrane transport and the ATP synthase. Cytochrome c oxidase is the component of the respiratory chain that catalyzes the reduction of oxygen to water. Electrons originating from reduced cytochrome c in the intermembrane space (IMS) are transferred via the dinuclear copper A center (CU(A)) of subunit 2 and heme A of subunit 1 to the active site in subunit 1, a binuclear center (BNC) formed by heme A3 and copper B (CU(B)). The BNC reduces molecular oxygen to 2 water molecules using 4 electrons from cytochrome c in the IMS and 4 protons from the mitochondrial matrix. This chain is Cytochrome c oxidase subunit 2 (MT-CO2), found in Mammuthus primigenius (Siberian woolly mammoth).